A 343-amino-acid chain; its full sequence is uncharacterized protein (343 aa).

This is an uncharacterized protein from Saccharolobus islandicus (Sulfolobus islandicus).